Reading from the N-terminus, the 310-residue chain is Thioredoxin reductase (310 aa).

FAD is bound at residue 34–41 (NGIQPGGQ). A disulfide bridge connects residues Cys-135 and Cys-138. 281–290 (DVQDKIYRQA) contacts FAD.

Belongs to the class-II pyridine nucleotide-disulfide oxidoreductase family. Homodimer. Requires FAD as cofactor.

The protein resides in the cytoplasm. It carries out the reaction [thioredoxin]-dithiol + NADP(+) = [thioredoxin]-disulfide + NADPH + H(+). The sequence is that of Thioredoxin reductase (trxB) from Rickettsia bellii (strain RML369-C).